Here is a 356-residue protein sequence, read N- to C-terminus: DNA polymerase IV (356 aa).

Residues Met1–Gly188 enclose the UmuC domain. The Mg(2+) site is built by Asp11 and Asp106. Glu107 is an active-site residue.

It belongs to the DNA polymerase type-Y family. Monomer. It depends on Mg(2+) as a cofactor.

It localises to the cytoplasm. The catalysed reaction is DNA(n) + a 2'-deoxyribonucleoside 5'-triphosphate = DNA(n+1) + diphosphate. Functionally, poorly processive, error-prone DNA polymerase involved in untargeted mutagenesis. Copies undamaged DNA at stalled replication forks, which arise in vivo from mismatched or misaligned primer ends. These misaligned primers can be extended by PolIV. Exhibits no 3'-5' exonuclease (proofreading) activity. May be involved in translesional synthesis, in conjunction with the beta clamp from PolIII. The protein is DNA polymerase IV of Listeria monocytogenes serovar 1/2a (strain ATCC BAA-679 / EGD-e).